The primary structure comprises 311 residues: Putative ribose-phosphate pyrophosphokinase 2 (311 aa).

ATP is bound by residues 38-40 (DGE) and 97-98 (RQ). 2 residues coordinate Mg(2+): histidine 131 and aspartate 171. D-ribose 5-phosphate is bound at residue aspartate 219.

It belongs to the ribose-phosphate pyrophosphokinase family. Class I subfamily. As to quaternary structure, homohexamer. Requires Mg(2+) as cofactor.

Its subcellular location is the cytoplasm. The enzyme catalyses D-ribose 5-phosphate + ATP = 5-phospho-alpha-D-ribose 1-diphosphate + AMP + H(+). The protein operates within metabolic intermediate biosynthesis; 5-phospho-alpha-D-ribose 1-diphosphate biosynthesis; 5-phospho-alpha-D-ribose 1-diphosphate from D-ribose 5-phosphate (route I): step 1/1. Involved in the biosynthesis of the central metabolite phospho-alpha-D-ribosyl-1-pyrophosphate (PRPP) via the transfer of pyrophosphoryl group from ATP to 1-hydroxyl of ribose-5-phosphate (Rib-5-P). This chain is Putative ribose-phosphate pyrophosphokinase 2, found in Listeria innocua serovar 6a (strain ATCC BAA-680 / CLIP 11262).